A 341-amino-acid polypeptide reads, in one-letter code: Dihydroorotate dehydrogenase (quinone) (341 aa).

FMN-binding positions include 61–65 (AGLDK) and Thr-85. Lys-65 serves as a coordination point for substrate. Residue 110–114 (NRMGF) coordinates substrate. Residues Asn-138 and Asn-171 each contribute to the FMN site. Residue Asn-171 participates in substrate binding. The active-site Nucleophile is the Ser-174. Asn-176 lines the substrate pocket. Residues Lys-216 and Thr-244 each contribute to the FMN site. Residue 245 to 246 (NT) coordinates substrate. Residues Gly-267, Gly-296, and 317-318 (YS) contribute to the FMN site.

The protein belongs to the dihydroorotate dehydrogenase family. Type 2 subfamily. In terms of assembly, monomer. The cofactor is FMN.

It is found in the cell membrane. It catalyses the reaction (S)-dihydroorotate + a quinone = orotate + a quinol. Its pathway is pyrimidine metabolism; UMP biosynthesis via de novo pathway; orotate from (S)-dihydroorotate (quinone route): step 1/1. In terms of biological role, catalyzes the conversion of dihydroorotate to orotate with quinone as electron acceptor. The polypeptide is Dihydroorotate dehydrogenase (quinone) (Pseudomonas putida (strain GB-1)).